The primary structure comprises 84 residues: Small ribosomal subunit protein bS18 (84 aa).

The protein belongs to the bacterial ribosomal protein bS18 family. As to quaternary structure, part of the 30S ribosomal subunit. Forms a tight heterodimer with protein bS6.

Binds as a heterodimer with protein bS6 to the central domain of the 16S rRNA, where it helps stabilize the platform of the 30S subunit. The sequence is that of Small ribosomal subunit protein bS18 from Vesicomyosocius okutanii subsp. Calyptogena okutanii (strain HA).